The chain runs to 192 residues: Vascular endothelial growth factor A (192 aa).

Positions 1–26 (MNFLLTWIHWGLAALLYFHNAKVLQA) are cleaved as a signal peptide. 3 disulfide bridges follow: cysteine 52/cysteine 94, cysteine 83/cysteine 128, and cysteine 87/cysteine 130. N-linked (GlcNAc...) asparagine glycosylation occurs at asparagine 101.

This sequence belongs to the PDGF/VEGF growth factor family. As to quaternary structure, homodimer; disulfide-linked. Also found as heterodimer with PGF. Interacts with FLT1/VEGFR1 and KDR/VEGFR2 receptors, heparan sulfate and heparin. In terms of tissue distribution, expressed by the venom gland, and probably other tissues.

Its subcellular location is the secreted. Its function is as follows. Growth factor active in angiogenesis, vasculogenesis and endothelial cell growth. Induces endothelial cell proliferation, promotes cell migration, inhibits apoptosis and induces permeabilization of blood vessels. The sequence is that of Vascular endothelial growth factor A from Agkistrodon piscivorus piscivorus (Eastern cottonmouth).